We begin with the raw amino-acid sequence, 427 residues long: Serine--tRNA ligase (427 aa).

228–230 is a binding site for L-serine; that stretch reads TSE. 259–261 provides a ligand contact to ATP; it reads RSE. E282 serves as a coordination point for L-serine. 346 to 349 is an ATP binding site; the sequence is EISS. S384 lines the L-serine pocket.

It belongs to the class-II aminoacyl-tRNA synthetase family. Type-1 seryl-tRNA synthetase subfamily. In terms of assembly, homodimer. The tRNA molecule binds across the dimer.

It is found in the cytoplasm. It catalyses the reaction tRNA(Ser) + L-serine + ATP = L-seryl-tRNA(Ser) + AMP + diphosphate + H(+). The catalysed reaction is tRNA(Sec) + L-serine + ATP = L-seryl-tRNA(Sec) + AMP + diphosphate + H(+). Its pathway is aminoacyl-tRNA biosynthesis; selenocysteinyl-tRNA(Sec) biosynthesis; L-seryl-tRNA(Sec) from L-serine and tRNA(Sec): step 1/1. Its function is as follows. Catalyzes the attachment of serine to tRNA(Ser). Is also able to aminoacylate tRNA(Sec) with serine, to form the misacylated tRNA L-seryl-tRNA(Sec), which will be further converted into selenocysteinyl-tRNA(Sec). The polypeptide is Serine--tRNA ligase (Ehrlichia ruminantium (strain Welgevonden)).